A 207-amino-acid chain; its full sequence is Ubiquitin-conjugating enzyme E2 E3 (207 aa).

Residues 1-10 (MSSDRQRSDD) are compositionally biased toward basic and acidic residues. Residues 1 to 63 (MSSDRQRSDD…KTTAKLSTSA (63 aa)) form a disordered region. The residue at position 2 (Ser2) is an N-acetylserine. Ser8 carries the phosphoserine modification. Over residues 50–63 (KLSSKTTAKLSTSA) the composition is skewed to low complexity. In terms of domain architecture, UBC core spans 61–207 (TSAKRIQKEL…ARQWTKRYAT (147 aa)). Cys145 (glycyl thioester intermediate) is an active-site residue.

This sequence belongs to the ubiquitin-conjugating enzyme family. In terms of assembly, the ubiquitin-loaded form interacts specifically with importin-11 (IPO11), leading to its import into the nucleus. Interacts with NEDD4L.

The protein localises to the nucleus. Its subcellular location is the cytoplasm. The enzyme catalyses S-ubiquitinyl-[E1 ubiquitin-activating enzyme]-L-cysteine + [E2 ubiquitin-conjugating enzyme]-L-cysteine = [E1 ubiquitin-activating enzyme]-L-cysteine + S-ubiquitinyl-[E2 ubiquitin-conjugating enzyme]-L-cysteine.. The protein operates within protein modification; protein ubiquitination. Accepts ubiquitin from the E1 complex and catalyzes its covalent attachment to other proteins. In vitro catalyzes 'Lys-11'- and 'Lys-48'-, as well as 'Lys-63'-linked polyubiquitination. Participates in the regulation of transepithelial sodium transport in renal cells. In Bos taurus (Bovine), this protein is Ubiquitin-conjugating enzyme E2 E3 (UBE2E3).